Reading from the N-terminus, the 342-residue chain is 11-beta-hydroxysteroid dehydrogenase-like 6 (342 aa).

Residues 10–30 form a helical; Signal-anchor for type II membrane protein membrane-spanning segment; sequence FLFPLLTLYALLVFYPTYQRL. NADP(+)-binding positions include 54 to 80 and Asp105; that span reads GAAS…VDIR. Ser184 lines the substrate pocket. The active-site Proton acceptor is Tyr197. Residues 197–201 and Lys201 contribute to the NADP(+) site; that span reads YCASK.

Belongs to the short-chain dehydrogenases/reductases (SDR) family.

It localises to the membrane. The sequence is that of 11-beta-hydroxysteroid dehydrogenase-like 6 (HSD6) from Arabidopsis thaliana (Mouse-ear cress).